The following is a 346-amino-acid chain: Phosphoribosylformylglycinamidine cyclo-ligase (346 aa).

It belongs to the AIR synthase family.

It localises to the cytoplasm. It catalyses the reaction 2-formamido-N(1)-(5-O-phospho-beta-D-ribosyl)acetamidine + ATP = 5-amino-1-(5-phospho-beta-D-ribosyl)imidazole + ADP + phosphate + H(+). It functions in the pathway purine metabolism; IMP biosynthesis via de novo pathway; 5-amino-1-(5-phospho-D-ribosyl)imidazole from N(2)-formyl-N(1)-(5-phospho-D-ribosyl)glycinamide: step 2/2. The polypeptide is Phosphoribosylformylglycinamidine cyclo-ligase (Bacillus licheniformis (strain ATCC 14580 / DSM 13 / JCM 2505 / CCUG 7422 / NBRC 12200 / NCIMB 9375 / NCTC 10341 / NRRL NRS-1264 / Gibson 46)).